The chain runs to 510 residues: Bifunctional purine biosynthesis protein PurH (510 aa).

Positions 1 to 143 constitute an MGS-like domain; the sequence is MTKRALISVS…KNHDAVLVLV (143 aa).

This sequence belongs to the PurH family.

The enzyme catalyses (6R)-10-formyltetrahydrofolate + 5-amino-1-(5-phospho-beta-D-ribosyl)imidazole-4-carboxamide = 5-formamido-1-(5-phospho-D-ribosyl)imidazole-4-carboxamide + (6S)-5,6,7,8-tetrahydrofolate. The catalysed reaction is IMP + H2O = 5-formamido-1-(5-phospho-D-ribosyl)imidazole-4-carboxamide. It participates in purine metabolism; IMP biosynthesis via de novo pathway; 5-formamido-1-(5-phospho-D-ribosyl)imidazole-4-carboxamide from 5-amino-1-(5-phospho-D-ribosyl)imidazole-4-carboxamide (10-formyl THF route): step 1/1. Its pathway is purine metabolism; IMP biosynthesis via de novo pathway; IMP from 5-formamido-1-(5-phospho-D-ribosyl)imidazole-4-carboxamide: step 1/1. The chain is Bifunctional purine biosynthesis protein PurH from Deinococcus radiodurans (strain ATCC 13939 / DSM 20539 / JCM 16871 / CCUG 27074 / LMG 4051 / NBRC 15346 / NCIMB 9279 / VKM B-1422 / R1).